The chain runs to 246 residues: Envelope glycoprotein gp95 (246 aa).

Residues isoleucine 1–leucine 192 are Extracellular-facing. Asparagine 31 is a glycosylation site (N-linked (GlcNAc...) asparagine; by host). Cysteine 50 and cysteine 86 are oxidised to a cystine. The segment at glycine 58–leucine 78 is fusion peptide. Residues alanine 75–leucine 125 are a coiled coil. N-linked (GlcNAc...) asparagine; by host glycosylation is present at asparagine 93. The interval leucine 114–glycine 130 is immunosuppression. The cysteines at positions 131 and 138 are disulfide-linked. Residue asparagine 141 is glycosylated (N-linked (GlcNAc...) asparagine; by host). Residues serine 143 to tryptophan 173 are a coiled coil. The chain crosses the membrane as a helical span at residues leucine 193–valine 213. 2 S-palmitoyl cysteine; by host lipidation sites follow: cysteine 205 and cysteine 208. Residues cysteine 214 to valine 246 are Cytoplasmic-facing.

Belongs to the Alpharetroviruses envelope glycoprotein family. In terms of assembly, heterodimer with the transmembrane protein. The mature envelope protein (Env) consists of a trimer of SU-TM heterodimers attached by a labile interchain disulfide bond. As to quaternary structure, heterodimer with the surface protein. The mature envelope protein (Env) consists of a trimer of SU-TM heterodimers attached by a labile interchain disulfide bond. In terms of processing, specific enzymatic cleavages in vivo yield mature proteins. Envelope glycoproteins are synthesized as an inactive precursor that is N-glycosylated and processed likely by host cell furin or by a furin-like protease in the Golgi to yield the mature SU and TM proteins. The cleavage site between SU and TM requires the minimal sequence [KR]-X-[KR]-R. The transmembrane protein is palmitoylated. Palmitoylation is necessary for glycoprotein function and infectivity.

The protein localises to the virion membrane. Its subcellular location is the host cell membrane. The surface protein (SU) attaches the virus to the host cell by binding to its receptor. This interaction triggers the refolding of the transmembrane protein (TM) thereby unmasking its fusion peptide and the formation of a reactive thiolate to activate its fusogenic potential. Fusion occurs at the host cell plasma membrane. Its function is as follows. The transmembrane protein (TM) acts as a class I viral fusion protein. Under the current model, the protein has at least 3 conformational states: pre-fusion native state, pre-hairpin intermediate state, and post-fusion hairpin state. During viral and target cell membrane fusion, the coiled coil regions (heptad repeats) assume a trimer-of-hairpins structure, positioning the fusion peptide in close proximity to the C-terminal region of the ectodomain. The formation of this structure appears to drive apposition and subsequent fusion of viral and target cell membranes. Membranes fusion leads to delivery of the nucleocapsid into the cytoplasm. In Galliformes, this protein is Envelope glycoprotein gp95 (env).